The chain runs to 115 residues: Cell division topological specificity factor (115 aa).

The interval 89–115 is disordered; sequence TGQIQLKEPKNQSEVDSPETEGKDQNS.

The protein belongs to the MinE family.

Functionally, prevents the cell division inhibition by proteins MinC and MinD at internal division sites while permitting inhibition at polar sites. This ensures cell division at the proper site by restricting the formation of a division septum at the midpoint of the long axis of the cell. The polypeptide is Cell division topological specificity factor (Prochlorococcus marinus (strain NATL2A)).